Consider the following 667-residue polypeptide: Trifunctional UDP-glucose 4,6-dehydratase/UDP-4-keto-6-deoxy-D-glucose 3,5-epimerase/UDP-4-keto-L-rhamnose-reductase RHM2 (667 aa).

Residue 15–21 coordinates NAD(+); it reads GAAGFIA. Residue Thr134 participates in substrate binding. Asp135 serves as the catalytic Proton donor. Active-site proton acceptor residues include Glu136 and Tyr161. 389–395 is a binding site for NADP(+); the sequence is GKTGWLG.

This sequence in the N-terminal section; belongs to the NAD(P)-dependent epimerase/dehydratase family. dTDP-glucose dehydratase subfamily. In the C-terminal section; belongs to the dTDP-4-dehydrorhamnose reductase family. NAD(+) is required as a cofactor. Requires NADP(+) as cofactor. As to expression, expressed in roots, stems, leaves, seedlings, inflorescence tips, and siliques.

The catalysed reaction is UDP-alpha-D-glucose = UDP-4-dehydro-6-deoxy-alpha-D-glucose + H2O. It functions in the pathway carbohydrate biosynthesis. In terms of biological role, trifunctional enzyme involved in UDP-beta-L-rhamnose biosynthesis, a precursor of the primary cell wall components rhamnogalacturonan I (RG-I) and rhamnogalacturonan II (RG-II). Catalyzes the dehydration of UDP-glucose to form UDP-4-dehydro-6-deoxy-D-glucose followed by the epimerization of the C3' and C5' positions of UDP-4-dehydro-6-deoxy-D-glucose to form UDP-4-keto-beta-L-rhamnose and the reduction of UDP-4-keto-beta-L-rhamnose to yield UDP-beta-L-rhamnose. Required for the normal seed coat epidermal development. This is Trifunctional UDP-glucose 4,6-dehydratase/UDP-4-keto-6-deoxy-D-glucose 3,5-epimerase/UDP-4-keto-L-rhamnose-reductase RHM2 from Arabidopsis thaliana (Mouse-ear cress).